Consider the following 404-residue polypeptide: Lysophospholipid transporter LplT (404 aa).

The next 12 helical transmembrane spans lie at methionine 16–alanine 36, isoleucine 53–alanine 73, alanine 91–valine 111, methionine 139–alanine 159, glycine 164–isoleucine 184, serine 195–tryptophan 213, leucine 227–leucine 247, alanine 253–alanine 273, cysteine 285–methionine 305, leucine 310–leucine 330, glycine 350–valine 370, and valine 372–glycine 392.

The protein belongs to the major facilitator superfamily. LplT (TC 2.A.1.42) family.

Its subcellular location is the cell inner membrane. Functionally, catalyzes the facilitated diffusion of 2-acyl-glycero-3-phosphoethanolamine (2-acyl-GPE) into the cell. In Yersinia enterocolitica serotype O:8 / biotype 1B (strain NCTC 13174 / 8081), this protein is Lysophospholipid transporter LplT.